Here is a 130-residue protein sequence, read N- to C-terminus: ER membrane protein complex subunit 5 (130 aa).

Topologically, residues 1–3 are cytoplasmic; sequence MAS. The chain crosses the membrane as a helical span at residues 4–22; sequence SFWKGVVGIGLFALAHAAF. The Lumenal portion of the chain corresponds to 23–43; it reads SAAQHRSYMRLTEKENETLPI. The chain crosses the membrane as a helical span at residues 44–63; sequence DIVLQTLLSFVITCYGIVHI. Topologically, residues 64–130 are cytoplasmic; it reads SGEFKDMDAS…LRLRKLENFH (67 aa).

It belongs to the membrane magnesium transporter (TC 1.A.67) family. In terms of assembly, component of the ER membrane protein complex (EMC).

It is found in the endoplasmic reticulum membrane. It localises to the golgi apparatus membrane. The protein localises to the early endosome membrane. In terms of biological role, part of the endoplasmic reticulum membrane protein complex (EMC) that enables the energy-independent insertion into endoplasmic reticulum membranes of newly synthesized membrane proteins. Preferentially accommodates proteins with transmembrane domains that are weakly hydrophobic or contain destabilizing features such as charged and aromatic residues. Involved in the cotranslational insertion of multi-pass membrane proteins in which stop-transfer membrane-anchor sequences become ER membrane spanning helices. It is also required for the post-translational insertion of tail-anchored/TA proteins in endoplasmic reticulum membranes. By mediating the proper cotranslational insertion of N-terminal transmembrane domains in an N-exo topology, with translocated N-terminus in the lumen of the ER, controls the topology of multi-pass membrane proteins like the G protein-coupled receptors. By regulating the insertion of various proteins in membranes, it is indirectly involved in many cellular processes. May be involved in Mg(2+) transport. This Danio rerio (Zebrafish) protein is ER membrane protein complex subunit 5.